We begin with the raw amino-acid sequence, 370 residues long: Protein Wnt-1 (370 aa).

An N-terminal signal peptide occupies residues 1–19 (MRVLALLLAVKAACVLLVS). A glycan (N-linked (GlcNAc...) asparagine) is linked at Asn-28. 5 disulfides stabilise this stretch: Cys-92/Cys-103, Cys-142/Cys-150, Cys-152/Cys-169, Cys-217/Cys-231, and Cys-219/Cys-226. Ser-223 is lipidated: O-palmitoleoyl serine; by PORCN. The interval 261–282 (GSNRASHRADPRHLEPENPAHK) is disordered. Basic and acidic residues predominate over residues 267–280 (HRADPRHLEPENPA). Intrachain disulfides connect Cys-299/Cys-330, Cys-315/Cys-325, Cys-329/Cys-369, Cys-345/Cys-360, Cys-347/Cys-357, and Cys-352/Cys-353. An N-linked (GlcNAc...) asparagine glycan is attached at Asn-316. The N-linked (GlcNAc...) asparagine glycan is linked to Asn-359.

It belongs to the Wnt family. In terms of processing, palmitoleoylation is required for efficient binding to frizzled receptors. Palmitoleoylation is necessary for proper trafficking to cell surface. Depalmitoleoylated by NOTUM, leading to inhibit Wnt signaling pathway.

It is found in the secreted. The protein resides in the extracellular space. It localises to the extracellular matrix. Ligand for members of the frizzled family of seven transmembrane receptors. Acts in the canonical Wnt signaling pathway by promoting beta-catenin-dependent transcriptional activation. Involved in neurogenesis. Performs a partially redundant function with wnt10b in the formation of the midbrain-hindbrain boundary (MHB) organizer. In the hindbrain, mediates lateral inhibition of boundary cell specification, probably via up-regulation of proneural and Delta gene expression in non-boundary cells; localized expression of wnt1 in boundary cells is maintained via rfng-mediated modulation of Notch activity. This chain is Protein Wnt-1 (wnt1), found in Danio rerio (Zebrafish).